The primary structure comprises 452 residues: MLRFYLFISLLCLVRSDTDETCPSFTKLSFHSAVVGTELNVRLLLYTRKNYTCAQIINSTTFGNLNVTKKTTFVVHGFRPTGSPPVWLQDLVKALLMVEDMNLVVVDWNRGATTVIYTQASNKTRKVAIILKEFIDQMLARGASLDDIYMIGVSLGAHISGFVGKMYNGQLGRITGLDPAGPLFNGKPPQDRLDPSDAQFVDVIHSDTDALGYKEPLGNIDFYPNGGVDQPGCPKTIFEAGMQYFKCDHQMSVYLYLSSLRKNCTITAYPCDSYRDYRNGKCINCGLPQGKPCPLLGYYADNWKDYLSEKDPPMTKAFFDTAEKEPYCMYHYFVDIITWNKSIRRGSITIKLKDEAGNTTESKINHEPVTFEKYHQVSLLARFNQDLDKVAEISLVFSTGAVIGPKYKLRILRMKLRSLAHPERPQLCRYDLVLTENVETPFQPIVCQKLQM.

The first 16 residues, 1 to 16 (MLRFYLFISLLCLVRS), serve as a signal peptide directing secretion. Residues N50, N66, and N122 are each glycosylated (N-linked (GlcNAc...) asparagine). S154 acts as the Nucleophile in catalysis. D178 functions as the Charge relay system in the catalytic mechanism. An intrachain disulfide couples C233 to C247. H249 serves as the catalytic Charge relay system. A glycan (N-linked (GlcNAc...) asparagine) is linked at N263. Cystine bridges form between C271/C282, C285/C293, and C428/C447.

Belongs to the AB hydrolase superfamily. Lipase family. Interacts with TTMP/C3orf52. In terms of tissue distribution, expressed in liver and lacrimal gland.

It is found in the secreted. Its subcellular location is the cell membrane. It carries out the reaction 1-hexadecanoyl-2-(9Z-octadecenoyl)-sn-glycero-3-phosphate + H2O = 2-(9Z-octadecenoyl)-sn-glycero-3-phosphate + hexadecanoate + H(+). Functionally, hydrolyzes specifically phosphatidic acid (PA) to produce 2-acyl lysophosphatidic acid (LPA; a potent bioactive lipid mediator) and fatty acid. Does not hydrolyze other phospholipids, like phosphatidylserine (PS), phosphatidylcholine (PC) and phosphatidylethanolamine (PE) or triacylglycerol (TG). The chain is Lipase member H (LIPH) from Oryctolagus cuniculus (Rabbit).